We begin with the raw amino-acid sequence, 1072 residues long: DNA-directed RNA polymerase subunit beta (1072 aa).

This sequence belongs to the RNA polymerase beta chain family. In terms of assembly, in plastids the minimal PEP RNA polymerase catalytic core is composed of four subunits: alpha, beta, beta', and beta''. When a (nuclear-encoded) sigma factor is associated with the core the holoenzyme is formed, which can initiate transcription.

It localises to the plastid. It is found in the chloroplast. The enzyme catalyses RNA(n) + a ribonucleoside 5'-triphosphate = RNA(n+1) + diphosphate. Its function is as follows. DNA-dependent RNA polymerase catalyzes the transcription of DNA into RNA using the four ribonucleoside triphosphates as substrates. This Lobularia maritima (Sweet alyssum) protein is DNA-directed RNA polymerase subunit beta.